We begin with the raw amino-acid sequence, 337 residues long: Dehydrogenase FUB6 (337 aa).

It belongs to the zinc-containing alcohol dehydrogenase family. Quinone oxidoreductase subfamily.

Its pathway is mycotoxin biosynthesis. Functionally, dehydrogenase; part of the gene cluster that mediates the biosynthesis of fusaric acid, a mycotoxin with low to moderate toxicity to animals and humans, but with high phytotoxic properties. L-aspartate is suggested as fusaric acid amino acid precursor that is activated and further processed to O-acetyl-L-homoserine by cluster enzymes aspartate kinase FUB3 and homoserine O-acetyltransferase FUB5, as well as enzymes of the primary metabolism. The polyketide synthase (PKS) FUB1 generates the triketide trans-2-hexenal which is presumptively released by the hydrolase FUB4 and linked to the NRPS-bound amino acid precursor by NAD(P)-dependent dehydrogenase FUB6. FUB1, FUB4, and the non-canonical NRPS Fub8 may form an enzyme complex. Further processing of the NRPS-bound intermediate might be carried out by FUB6 and the O-acetylhomoserine FUB7, enabling a spontaneous electrocyclization to close the carbon backbone of fusaric acid. Dihydrofusaric acid is likely to be released via reduction by the thioester reductase (TR) domain of FUB8 whereupon the final oxidation to fusaric acid may (also) be performed by the FMN-dependent dehydrogenase FUB9. The polypeptide is Dehydrogenase FUB6 (Gibberella fujikuroi (strain CBS 195.34 / IMI 58289 / NRRL A-6831) (Bakanae and foot rot disease fungus)).